Consider the following 246-residue polypeptide: NAD-dependent protein deacylase (246 aa).

Residues 1-246 enclose the Deacetylase sirtuin-type domain; the sequence is MDLSQARAAL…RGLELLLEDD (246 aa). 21 to 41 lines the NAD(+) pocket; sequence GAGISAESGIPTFRDAQTGHW. The substrate site is built by Y66 and R69. Residue 101–104 participates in NAD(+) binding; it reads QNVD. The active-site Proton acceptor is the H123. Residues 191 to 193, 217 to 219, and A235 each bind NAD(+); these read GTS and NPE.

This sequence belongs to the sirtuin family. Class III subfamily.

It localises to the cytoplasm. It carries out the reaction N(6)-acetyl-L-lysyl-[protein] + NAD(+) + H2O = 2''-O-acetyl-ADP-D-ribose + nicotinamide + L-lysyl-[protein]. The enzyme catalyses N(6)-succinyl-L-lysyl-[protein] + NAD(+) + H2O = 2''-O-succinyl-ADP-D-ribose + nicotinamide + L-lysyl-[protein]. In terms of biological role, NAD-dependent lysine deacetylase and desuccinylase that specifically removes acetyl and succinyl groups on target proteins. Modulates the activities of several proteins which are inactive in their acylated form. The polypeptide is NAD-dependent protein deacylase (Deinococcus radiodurans (strain ATCC 13939 / DSM 20539 / JCM 16871 / CCUG 27074 / LMG 4051 / NBRC 15346 / NCIMB 9279 / VKM B-1422 / R1)).